Reading from the N-terminus, the 168-residue chain is GTP-dependent dephospho-CoA kinase (168 aa).

The GTP site is built by Asp-49, Val-50, Val-51, Asp-68, Lys-70, and Glu-120.

This sequence belongs to the GTP-dependent DPCK family.

The catalysed reaction is 3'-dephospho-CoA + GTP = GDP + CoA + H(+). It participates in cofactor biosynthesis; coenzyme A biosynthesis. Functionally, catalyzes the GTP-dependent phosphorylation of the 3'-hydroxyl group of dephosphocoenzyme A to form coenzyme A (CoA). This is GTP-dependent dephospho-CoA kinase from Pyrobaculum calidifontis (strain DSM 21063 / JCM 11548 / VA1).